A 303-amino-acid chain; its full sequence is Glutamyl-Q tRNA(Asp) synthetase (303 aa).

L-glutamate is bound by residues 16 to 20 (RFAPS) and Glu-52. The short motif at 19–29 (PSPSGPLHFGS) is the 'HIGH' region element. Zn(2+) contacts are provided by Cys-108, Cys-110, Tyr-122, and Cys-126. Positions 177 and 195 each coordinate L-glutamate. A 'KMSKS' region motif is present at residues 233–237 (KLSKQ). Lys-236 serves as a coordination point for ATP.

This sequence belongs to the class-I aminoacyl-tRNA synthetase family. GluQ subfamily. Zn(2+) serves as cofactor.

Functionally, catalyzes the tRNA-independent activation of glutamate in presence of ATP and the subsequent transfer of glutamate onto a tRNA(Asp). Glutamate is transferred on the 2-amino-5-(4,5-dihydroxy-2-cyclopenten-1-yl) moiety of the queuosine in the wobble position of the QUC anticodon. This Vibrio vulnificus (strain YJ016) protein is Glutamyl-Q tRNA(Asp) synthetase.